Here is a 102-residue protein sequence, read N- to C-terminus: Small ribosomal subunit protein uS10 (102 aa).

It belongs to the universal ribosomal protein uS10 family. In terms of assembly, part of the 30S ribosomal subunit.

Involved in the binding of tRNA to the ribosomes. This is Small ribosomal subunit protein uS10 from Planobispora rosea.